Reading from the N-terminus, the 554-residue chain is CTP synthase (554 aa).

The tract at residues Met1–Leu265 is amidoligase domain. A CTP-binding site is contributed by Ser13. Ser13 provides a ligand contact to UTP. ATP-binding positions include Ser14–Ile19 and Asp71. Mg(2+) contacts are provided by Asp71 and Glu139. CTP-binding positions include Asp146–Glu148, Lys186–Gln191, and Lys222. UTP contacts are provided by residues Lys186–Gln191 and Lys222. The region spanning Thr292–Gly545 is the Glutamine amidotransferase type-1 domain. Residue Gly353 participates in L-glutamine binding. The Nucleophile; for glutamine hydrolysis role is filled by Cys380. Residues Tyr381–Gln384, Glu404, and Arg471 each bind L-glutamine. Catalysis depends on residues His518 and Glu520.

It belongs to the CTP synthase family. As to quaternary structure, homotetramer.

It catalyses the reaction UTP + L-glutamine + ATP + H2O = CTP + L-glutamate + ADP + phosphate + 2 H(+). It carries out the reaction L-glutamine + H2O = L-glutamate + NH4(+). The enzyme catalyses UTP + NH4(+) + ATP = CTP + ADP + phosphate + 2 H(+). It functions in the pathway pyrimidine metabolism; CTP biosynthesis via de novo pathway; CTP from UDP: step 2/2. With respect to regulation, allosterically activated by GTP, when glutamine is the substrate; GTP has no effect on the reaction when ammonia is the substrate. The allosteric effector GTP functions by stabilizing the protein conformation that binds the tetrahedral intermediate(s) formed during glutamine hydrolysis. Inhibited by the product CTP, via allosteric rather than competitive inhibition. Functionally, catalyzes the ATP-dependent amination of UTP to CTP with either L-glutamine or ammonia as the source of nitrogen. Regulates intracellular CTP levels through interactions with the four ribonucleotide triphosphates. The polypeptide is CTP synthase (Xylella fastidiosa (strain 9a5c)).